We begin with the raw amino-acid sequence, 440 residues long: Phosphatidylglycerol--prolipoprotein diacylglyceryl transferase (440 aa).

4 helical membrane passes run 21–41 (VPIR…LLIG), 53–73 (GVIY…GRLY), 96–116 (IWDG…GAWI), and 122–142 (GIPL…AQAI). A 1,2-diacyl-sn-glycero-3-phospho-(1'-sn-glycerol) is bound at residue R144. 2 consecutive transmembrane segments (helical) span residues 189–209 (VALV…LIFV) and 256–276 (INSF…MAAP). Positions 280–440 (EDPESLRGNQ…ARLRDRLSGR (161 aa)) are disordered. Residues 299 to 330 (EPATVAATTEAATEGVAAPADGAEAAGADATA) are compositionally biased toward low complexity. Residues 332–346 (RPEESAEPDVEKPES) are compositionally biased toward basic and acidic residues. Over residues 347 to 417 (EETEAEAAEE…PEQPVAEEPE (71 aa)) the composition is skewed to acidic residues. A compositionally biased stretch (basic and acidic residues) spans 424–440 (ETKRRWGARLRDRLSGR).

Belongs to the Lgt family.

The protein resides in the cell membrane. The enzyme catalyses L-cysteinyl-[prolipoprotein] + a 1,2-diacyl-sn-glycero-3-phospho-(1'-sn-glycerol) = an S-1,2-diacyl-sn-glyceryl-L-cysteinyl-[prolipoprotein] + sn-glycerol 1-phosphate + H(+). It functions in the pathway protein modification; lipoprotein biosynthesis (diacylglyceryl transfer). Functionally, catalyzes the transfer of the diacylglyceryl group from phosphatidylglycerol to the sulfhydryl group of the N-terminal cysteine of a prolipoprotein, the first step in the formation of mature lipoproteins. The protein is Phosphatidylglycerol--prolipoprotein diacylglyceryl transferase of Mycobacterium avium (strain 104).